The following is a 506-amino-acid chain: Histidine ammonia-lyase (506 aa).

A cross-link (5-imidazolinone (Ala-Gly)) is located at residues 142–144; it reads ASG. At serine 143 the chain carries 2,3-didehydroalanine (Ser).

Belongs to the PAL/histidase family. Contains an active site 4-methylidene-imidazol-5-one (MIO), which is formed autocatalytically by cyclization and dehydration of residues Ala-Ser-Gly.

Its subcellular location is the cytoplasm. The catalysed reaction is L-histidine = trans-urocanate + NH4(+). Its pathway is amino-acid degradation; L-histidine degradation into L-glutamate; N-formimidoyl-L-glutamate from L-histidine: step 1/3. The chain is Histidine ammonia-lyase from Bacillus cereus (strain B4264).